The sequence spans 144 residues: Prefoldin subunit alpha (144 aa).

This sequence belongs to the prefoldin subunit alpha family. In terms of assembly, heterohexamer of two alpha and four beta subunits.

Its subcellular location is the cytoplasm. Its function is as follows. Molecular chaperone capable of stabilizing a range of proteins. Seems to fulfill an ATP-independent, HSP70-like function in archaeal de novo protein folding. This is Prefoldin subunit alpha from Methanococcus maripaludis (strain DSM 14266 / JCM 13030 / NBRC 101832 / S2 / LL).